Consider the following 62-residue polypeptide: Large ribosomal subunit protein eL19 (62 aa).

It belongs to the eukaryotic ribosomal protein eL19 family.

This chain is Large ribosomal subunit protein eL19 (RPL19), found in Zea mays (Maize).